A 951-amino-acid polypeptide reads, in one-letter code: Serine/threonine-protein phosphatase 4 regulatory subunit 1 (951 aa).

8 HEAT repeats span residues 26-63 (ESDVIIIPSALDFVSQDEMLTPLGRLDKYAASENVFNR), 65-81 (MVARSLLDTLREVCDDE), 82-119 (RDCIAVLERISRLADDSEPTVRAELMEQVPHIALFCQE), 127-164 (AFSKYLLPIVVRYLADQNNQVRKTSQAALLALLEQELI), 168-206 (DVETKVCPVLIDLTAPDSNDDVKTEAVAIMCKMAPMVGK), 208-246 (ITERLILPRFCEMCCDCRMFHVRKVCAANFGDICSVVGQ), 248-285 (ATEEMLLPRFFQLCSDNVWGVRKACAECFMAVSCATCQ), and 287-324 (IRRTKLSALFINLISDPSRWVRQAAFQSLGPFISTFAN). Disordered regions lie at residues 325-377 (PSSS…HSSA), 411-451 (SESP…PLDQ), and 474-499 (QQDPEERLSPERTGDVPAAPLPGPPN). Residues 332–365 (FKDESKSSEDSSAEDKDRMRDNDVVEEEHRRPED) show a composition bias toward basic and acidic residues. Composition is skewed to polar residues over residues 411 to 421 (SESPQEAASND) and 430 to 445 (NSKSASRPDAGTSSPE). Over residues 474–487 (QQDPEERLSPERTG) the composition is skewed to basic and acidic residues. One copy of the HEAT 9 repeat lies at 506–543 (KELEEMIENLEPHMDDPDVKAQVDVLSAALRASSLDAH). The segment at 590–612 (DYVHGGADVSPGDGFSPDEDRRP) is disordered. 3 HEAT repeats span residues 699–735 (LTAADLVPIFNGFLKDLDEVRIGVLKHLHDFLKLLHI), 800–838 (WISYKLVSEMVKKLHTATPPTFGVDLINELVENFGRCPK), and 862–899 (QFAVHLMPHLLTLANDRVPNVRVLLAKTLRQTLLEKEY). Ser936 is modified (phosphoserine).

As to quaternary structure, serine/threonine-protein phosphatase 4 (PP4) occurs in different assemblies of the catalytic and one or more regulatory subunits. Component of the PP4 complex PPP4C-PPP4R1. Interacts with HDAC3.

Its function is as follows. Regulatory subunit of serine/threonine-protein phosphatase 4. May play a role in regulation of cell division in renal glomeruli. The PPP4C-PPP4R1 PP4 complex may play a role in dephosphorylation and regulation of HDAC3. Plays a role in the inhibition of TNF-induced NF-kappa-B activation by regulating the dephosphorylation of TRAF2. The protein is Serine/threonine-protein phosphatase 4 regulatory subunit 1 (Ppp4r1) of Mus musculus (Mouse).